Reading from the N-terminus, the 120-residue chain is BolA-like protein 2 (120 aa).

This sequence belongs to the BolA/IbaG family. Interacts with FRA1, GRX3 and GRX4.

It is found in the cytoplasm. It localises to the nucleus. Involved in the regulation of the iron regulon in response to decreased mitochondrial iron-sulfur cluster synthesis. May be involved in mitochondrial organization and biogenesis. This is BolA-like protein 2 (BOL2) from Saccharomyces cerevisiae (strain ATCC 204508 / S288c) (Baker's yeast).